The primary structure comprises 440 residues: Ribosomal protein uS12 methylthiotransferase RimO (440 aa).

The region spanning 5-115 is the MTTase N-terminal domain; it reads PTVGFVSLGC…VVNAVHEVVP (111 aa). 6 residues coordinate [4Fe-4S] cluster: Cys-14, Cys-50, Cys-79, Cys-148, Cys-152, and Cys-155. Residues 134-372 enclose the Radical SAM core domain; it reads LTPRHYAYLK…MAHQQAISAA (239 aa). The TRAM domain occupies 375–440; that stretch reads QLKVGKELDV…DEYDLWAEVI (66 aa).

It belongs to the methylthiotransferase family. RimO subfamily. It depends on [4Fe-4S] cluster as a cofactor.

The protein localises to the cytoplasm. The enzyme catalyses L-aspartate(89)-[ribosomal protein uS12]-hydrogen + (sulfur carrier)-SH + AH2 + 2 S-adenosyl-L-methionine = 3-methylsulfanyl-L-aspartate(89)-[ribosomal protein uS12]-hydrogen + (sulfur carrier)-H + 5'-deoxyadenosine + L-methionine + A + S-adenosyl-L-homocysteine + 2 H(+). Its function is as follows. Catalyzes the methylthiolation of an aspartic acid residue of ribosomal protein uS12. The chain is Ribosomal protein uS12 methylthiotransferase RimO from Stutzerimonas stutzeri (strain A1501) (Pseudomonas stutzeri).